We begin with the raw amino-acid sequence, 453 residues long: Serine/threonine-protein phosphatase 2A regulatory subunit B'' subunit gamma (453 aa).

The disordered stretch occupies residues 1–27 (MDWKDVLRRRLASPNSDPKRKKSEQEL). EF-hand domains lie at 273-308 (PSALRVYGQYLNLDKDHNGMLSKEELSRYGTATMTN) and 341-376 (KEPAALQYIFKLLDIENKGYLNVFSLNYFFRAIQEL). Residues Asp286, Asp288, Asn290, Met292, and Glu297 each contribute to the Ca(2+) site.

Interacts with MCM3AP/GANP, PPP5C, and the phosphatase 2A core enzyme composed of the PPP2CA catalytic subunit and the constant regulatory subunit PPP2R1A. Finds in a complex with ABCB1, TFPI2 and PPP2R3C; leading to the dephosphorylation of ABCB1.

The protein resides in the nucleus. It localises to the cytoplasm. In terms of biological role, may regulate MCM3AP phosphorylation through phosphatase recruitment. May act as a negative regulator of ABCB1 expression and function through the dephosphorylation of ABCB1 by TFPI2/PPP2R3C complex. May play a role in the activation-induced cell death of B-cells. The chain is Serine/threonine-protein phosphatase 2A regulatory subunit B'' subunit gamma (Ppp2r3c) from Rattus norvegicus (Rat).